Consider the following 431-residue polypeptide: MSLMTKLGFRALVASCLITAGSAANAQVNVLITGVGSTQFPIATANFTNEANLPQQITSIVRADLARSGKFTNIDAGSTPVPETASVDLGAWKAKGANAFVAGSVNRDANGQYKVNFILYDTVKQQSLGGLSLTATDTTLRTAGHKIADYIYQKLLGVRGVFATRLSYVIKTGNRYQLQISDSDGQNARIALSSTEPIISPAWSPSGTKVAYVSFERKKPIVYIHDLPTGRRYMVSDQKGNNSAPAWSPDSNTLAVALSLTGNTQIYTVNANGGGLRRLTQSSSIDTEPFYSPDGRWIYFTSDRGGAPQIYRMPAQGESAGAAQRVTFTGSYNTSPRVSPDGKLLAYISRTGGGFKLYVQDLQTGAANAITNTNRDESPSFAANGQYLLYATQSGGRNVLAAVPSDGSAPPQILSVQGGSVREPSWGPFMQ.

Positions 1–26 are cleaved as a signal peptide; it reads MSLMTKLGFRALVASCLITAGSAANA. Residues 406-431 are disordered; it reads DGSAPPQILSVQGGSVREPSWGPFMQ.

The protein belongs to the TolB family. As to quaternary structure, the Tol-Pal system is composed of five core proteins: the inner membrane proteins TolA, TolQ and TolR, the periplasmic protein TolB and the outer membrane protein Pal. They form a network linking the inner and outer membranes and the peptidoglycan layer.

The protein localises to the periplasm. Its function is as follows. Part of the Tol-Pal system, which plays a role in outer membrane invagination during cell division and is important for maintaining outer membrane integrity. The protein is Tol-Pal system protein TolB of Burkholderia orbicola (strain MC0-3).